We begin with the raw amino-acid sequence, 84 residues long: Putative UPF0320 protein YAL068W-A (84 aa).

Belongs to the UPF0320 family.

The protein is Putative UPF0320 protein YAL068W-A of Saccharomyces cerevisiae (strain ATCC 204508 / S288c) (Baker's yeast).